The primary structure comprises 646 residues: Lipoteichoic acid synthase (646 aa).

Residues 1-7 (MSLPKKK) lie on the Cytoplasmic side of the membrane. The helical transmembrane segment at 8–28 (IGIFAFFLLTVFTITLKTYFS) threads the bilayer. Over 29–43 (YYVDFSLGVKGLVQN) the chain is Extracellular. Residues 44–64 (LILLMNPYSLIALVLSVFLFF) form a helical membrane-spanning segment. Topologically, residues 65 to 68 (KGKK) are cytoplasmic. The chain crosses the membrane as a helical span at residues 69–89 (AFWFIFIGGFLLTFLLYANVV). At 90 to 119 (YFRFFSDFLTFSTLNQAGNVESMGGAVSAS) the chain is on the extracellular side. A helical transmembrane segment spans residues 120–140 (FKWYDFVYFIDTIIYLAILIF). At 141–153 (KRKWLDNRAFSKK) the chain is on the cytoplasmic side. Residues 154–174 (FVPVVMATSVALFFLNLAFAE) form a helical membrane-spanning segment. The Extracellular portion of the chain corresponds to 175-646 (TDRPELLTRT…KSGPKGNEKK (472 aa)). Residues E255 and T300 each contribute to the Mn(2+) site. T300 is a catalytic residue. H416 is a binding site for substrate. Mn(2+)-binding residues include D475 and H476.

This sequence belongs to the LTA synthase family. Post-translationally, proteolytically cleaved.

It is found in the cell membrane. It localises to the secreted. The protein operates within cell wall biogenesis; lipoteichoic acid biosynthesis. Its function is as follows. Catalyzes the polymerization of lipoteichoic acid (LTA) polyglycerol phosphate, a reaction that presumably uses phosphatidylglycerol (PG) as substrate. Is required for staphylococcal growth and cell division process. The polypeptide is Lipoteichoic acid synthase (ltaS) (Staphylococcus epidermidis (strain ATCC 35984 / DSM 28319 / BCRC 17069 / CCUG 31568 / BM 3577 / RP62A)).